A 334-amino-acid chain; its full sequence is Methionine adenosyltransferase 2 subunit beta (334 aa).

Residues 37–40 (TGLL), 60–62 (FRR), 71–72 (NL), Cys-93, Arg-97, Tyr-159, and Leu-185 each bind NADP(+). Phosphothreonine is present on Thr-309. Residues 319-334 (LWPFLIDKRWRQTVFH) form a required for interaction with MAT2A region.

Belongs to the dTDP-4-dehydrorhamnose reductase family. MAT2B subfamily. Heterotrimer; composed of a catalytic MAT2A homodimer that binds one regulatory MAT2B chain. Heterohexamer; composed of a central, catalytic MAT2A homotetramer flanked on either side by a regulatory MAT2B chain. NADP binding increases the affinity for MAT2A.

The protein operates within amino-acid biosynthesis; S-adenosyl-L-methionine biosynthesis; S-adenosyl-L-methionine from L-methionine: step 1/1. Regulatory subunit of S-adenosylmethionine synthetase 2, an enzyme that catalyzes the formation of S-adenosylmethionine from methionine and ATP. Regulates MAT2A catalytic activity by changing its kinetic properties, increasing its affinity for L-methionine. Can bind NADP (in vitro). This Pongo abelii (Sumatran orangutan) protein is Methionine adenosyltransferase 2 subunit beta (MAT2B).